The sequence spans 576 residues: Proline--tRNA ligase (576 aa).

Belongs to the class-II aminoacyl-tRNA synthetase family. ProS type 1 subfamily. Homodimer.

The protein resides in the cytoplasm. It carries out the reaction tRNA(Pro) + L-proline + ATP = L-prolyl-tRNA(Pro) + AMP + diphosphate. Its function is as follows. Catalyzes the attachment of proline to tRNA(Pro) in a two-step reaction: proline is first activated by ATP to form Pro-AMP and then transferred to the acceptor end of tRNA(Pro). As ProRS can inadvertently accommodate and process non-cognate amino acids such as alanine and cysteine, to avoid such errors it has two additional distinct editing activities against alanine. One activity is designated as 'pretransfer' editing and involves the tRNA(Pro)-independent hydrolysis of activated Ala-AMP. The other activity is designated 'posttransfer' editing and involves deacylation of mischarged Ala-tRNA(Pro). The misacylated Cys-tRNA(Pro) is not edited by ProRS. This chain is Proline--tRNA ligase, found in Dechloromonas aromatica (strain RCB).